Consider the following 117-residue polypeptide: Biogenesis of lysosome-related organelles complex 1 subunit BLS1 (117 aa).

The interval 97 to 117 (EGKAQDTEQAPGKGDRIFRSD) is disordered.

It belongs to the BLOC1S1 family. As to quaternary structure, component of the biogenesis of lysosome-related organelles complex-1 (BLOC-1).

The protein resides in the endosome. Its function is as follows. Component of the biogenesis of lysosome-related organelles complex-1 (BLOC-1), a complex involved in endosomal cargo sorting. In Eremothecium gossypii (strain ATCC 10895 / CBS 109.51 / FGSC 9923 / NRRL Y-1056) (Yeast), this protein is Biogenesis of lysosome-related organelles complex 1 subunit BLS1 (BLS1).